A 38-amino-acid chain; its full sequence is Photosystem II reaction center protein L (38 aa).

Residues 17-37 form a helical membrane-spanning segment; the sequence is SLFWGLLLIFVLAVLFSNYFF.

Belongs to the PsbL family. PSII is composed of 1 copy each of membrane proteins PsbA, PsbB, PsbC, PsbD, PsbE, PsbF, PsbH, PsbI, PsbJ, PsbK, PsbL, PsbM, PsbT, PsbX, PsbY, PsbZ, Psb30/Ycf12, at least 3 peripheral proteins of the oxygen-evolving complex and a large number of cofactors. It forms dimeric complexes.

The protein resides in the plastid. It localises to the chloroplast thylakoid membrane. Functionally, one of the components of the core complex of photosystem II (PSII). PSII is a light-driven water:plastoquinone oxidoreductase that uses light energy to abstract electrons from H(2)O, generating O(2) and a proton gradient subsequently used for ATP formation. It consists of a core antenna complex that captures photons, and an electron transfer chain that converts photonic excitation into a charge separation. This subunit is found at the monomer-monomer interface and is required for correct PSII assembly and/or dimerization. The chain is Photosystem II reaction center protein L from Chaetosphaeridium globosum (Charophycean green alga).